A 72-amino-acid chain; its full sequence is Beta-defensin 104A (72 aa).

A signal peptide spans 1-22 (MRRLVLLLAISLLLYQDLPVRS). Disulfide bonds link Cys-30/Cys-57, Cys-37/Cys-51, and Cys-41/Cys-58.

It belongs to the beta-defensin family.

It localises to the secreted. Its function is as follows. Has antimicrobial activity. This chain is Beta-defensin 104A (DEFB104A), found in Pongo pygmaeus (Bornean orangutan).